Reading from the N-terminus, the 1010-residue chain is Lysosomal alpha-mannosidase (1010 aa).

The signal sequence occupies residues 1 to 22; that stretch reads MVIKKLFILIFCLFLIINEING. A propeptide spans 23–40 (pro I); the sequence is KKTKINDIKKSKPKLSST. Zn(2+) is bound by residues His51 and Asp53. N-linked (GlcNAc...) asparagine glycosylation occurs at Asn68. Asp173 and His420 together coordinate Zn(2+). Residue Asp173 is the Nucleophile of the active site. 10 N-linked (GlcNAc...) asparagine glycosylation sites follow: Asn480, Asn520, Asn528, Asn539, Asn623, Asn760, Asn784, Asn828, Asn954, and Asn963. A propeptide spans 508 to 595 (pro II); the sequence is RNEPVRIPIP…GGGKINEKVS (88 aa).

This sequence belongs to the glycosyl hydrolase 38 family. In terms of assembly, tetramer of equimolar amounts of 60 and 58 kDa subunits. Zn(2+) serves as cofactor. First cleaved into the mature 58 kDa subunit and an intermediate 82 kDa subunit. The latter is then cleaved to its mature 60 kDa subunit form. These events occur in multiple intracellular compartments. The 60 kDa subunit may form one or more intramolecular disulfide bonds.

The protein localises to the lysosome. It catalyses the reaction Hydrolysis of terminal, non-reducing alpha-D-mannose residues in alpha-D-mannosides.. The chain is Lysosomal alpha-mannosidase (manA) from Dictyostelium discoideum (Social amoeba).